The following is a 447-amino-acid chain: Probable ribonuclease FAU-1 (447 aa).

Residues 424 to 447 are disordered; it reads PEAPGGKICTPEGLTSAPPRSSSA.

This sequence belongs to the FAU-1 family.

Its function is as follows. Probable RNase involved in rRNA stability through maturation and/or degradation of precursor rRNAs. Binds to RNA in loop regions with AU-rich sequences. The sequence is that of Probable ribonuclease FAU-1 from Pyrobaculum neutrophilum (strain DSM 2338 / JCM 9278 / NBRC 100436 / V24Sta) (Thermoproteus neutrophilus).